Consider the following 287-residue polypeptide: Elongation factor Ts (287 aa).

The interval 80 to 83 is involved in Mg(2+) ion dislocation from EF-Tu; it reads TDFL.

It belongs to the EF-Ts family.

The protein resides in the cytoplasm. Functionally, associates with the EF-Tu.GDP complex and induces the exchange of GDP to GTP. It remains bound to the aminoacyl-tRNA.EF-Tu.GTP complex up to the GTP hydrolysis stage on the ribosome. This Stutzerimonas stutzeri (strain A1501) (Pseudomonas stutzeri) protein is Elongation factor Ts.